The sequence spans 129 residues: Small ribosomal subunit protein uS11 (129 aa).

It belongs to the universal ribosomal protein uS11 family. In terms of assembly, part of the 30S ribosomal subunit. Interacts with proteins S7 and S18. Binds to IF-3.

Located on the platform of the 30S subunit, it bridges several disparate RNA helices of the 16S rRNA. Forms part of the Shine-Dalgarno cleft in the 70S ribosome. The polypeptide is Small ribosomal subunit protein uS11 (Rhodopseudomonas palustris (strain HaA2)).